A 156-amino-acid chain; its full sequence is Small ribosomal subunit protein uS7 (156 aa).

The protein belongs to the universal ribosomal protein uS7 family. Part of the 30S ribosomal subunit. Contacts proteins S9 and S11.

Its function is as follows. One of the primary rRNA binding proteins, it binds directly to 16S rRNA where it nucleates assembly of the head domain of the 30S subunit. Is located at the subunit interface close to the decoding center, probably blocks exit of the E-site tRNA. This chain is Small ribosomal subunit protein uS7, found in Anaeromyxobacter sp. (strain Fw109-5).